A 326-amino-acid polypeptide reads, in one-letter code: Glyoxylate/hydroxypyruvate reductase B (326 aa).

Active-site residues include Arg237 and Glu266. The Proton donor role is filled by His285.

Belongs to the D-isomer specific 2-hydroxyacid dehydrogenase family. GhrB subfamily. Homodimer.

The protein localises to the cytoplasm. It carries out the reaction glycolate + NADP(+) = glyoxylate + NADPH + H(+). The enzyme catalyses (R)-glycerate + NAD(+) = 3-hydroxypyruvate + NADH + H(+). It catalyses the reaction (R)-glycerate + NADP(+) = 3-hydroxypyruvate + NADPH + H(+). Functionally, catalyzes the NADPH-dependent reduction of glyoxylate and hydroxypyruvate into glycolate and glycerate, respectively. The sequence is that of Glyoxylate/hydroxypyruvate reductase B from Yersinia pseudotuberculosis serotype O:3 (strain YPIII).